The sequence spans 33 residues: Photosystem II reaction center protein Psb30 (33 aa).

Residues L5–L25 form a helical membrane-spanning segment.

The protein belongs to the Psb30/Ycf12 family. In terms of assembly, PSII is composed of 1 copy each of membrane proteins PsbA, PsbB, PsbC, PsbD, PsbE, PsbF, PsbH, PsbI, PsbJ, PsbK, PsbL, PsbM, PsbT, PsbY, PsbZ, Psb30/Ycf12, peripheral proteins of the oxygen-evolving complex and a large number of cofactors. It forms dimeric complexes.

Its subcellular location is the plastid. The protein localises to the chloroplast thylakoid membrane. Functionally, a core subunit of photosystem II (PSII), probably helps stabilize the reaction center. In Euglena sanguinea, this protein is Photosystem II reaction center protein Psb30.